Here is a 948-residue protein sequence, read N- to C-terminus: Probable disease resistance protein At5g47260 (948 aa).

Positions 20–57 form a coiled coil; sequence RKYLYNLERNLEALHKVMQDLNAMRNDLLKRLSKEEEI. An NB-ARC domain is found at 134 to 432; that stretch reads HRALPPLVIK…CEGILAKEDR (299 aa). 176–183 lines the ATP pocket; it reads GRGGVGKT. LRR repeat units follow at residues 498 to 519, 520 to 542, 545 to 567, 569 to 591, 592 to 614, 615 to 636, 640 to 661, 666 to 686, and 690 to 711; these read MIRRMSVTSTQIQNISDSPQCS, ELTTLVFRRNRHLKWISGAFFQW, GLVVLDLSFNRELAELPEEVSSL, LLRFLNLSWTCIKGLPLGLKELK, SLIHLDLDYTSNLQEVDVIASLL, NLQVLRLFHSVSMDLKLMEDIQ, SLKELSLTVRGSSVLQRLLSIQ, SIRRLHLTETTIVDGGILSLN, and SLCELDILGCNILEITIDWRCT.

The protein belongs to the disease resistance NB-LRR family.

Its function is as follows. Potential disease resistance protein. The sequence is that of Probable disease resistance protein At5g47260 from Arabidopsis thaliana (Mouse-ear cress).